We begin with the raw amino-acid sequence, 96 residues long: Putative antiholin (96 aa).

The Periplasmic portion of the chain corresponds to 1-4 (MIEM). Cytoplasmic segments lie at residues 1–32 (MIEMEFGKELLVYMTFLVVVTPVFVQAIKKTE) and 26–29 (QAIK). The helical transmembrane segment at 5–25 (EFGKELLVYMTFLVVVTPVFV) threads the bilayer. A helical transmembrane segment spans residues 33–55 (LVPSKWLPTVSILIGAILGALAT). The Periplasmic segment spans residues 56-60 (FLDGS). The chain crosses the membrane as a helical span at residues 61–81 (GSLATMIWAGALAGAGGTGLF). Topologically, residues 82–96 (EQFTNRSKKYGEDDK) are cytoplasmic.

Homomultimer. Interacts with isoform Antiholin; this interaction blocks the holin homomultimerization and delays host cell lysis.

Its subcellular location is the host cell inner membrane. Its function is as follows. Accumulates harmlessly in the cytoplasmic membrane until it reaches a critical concentration that triggers the formation of micron-scale pores (holes) causing host cell membrane disruption and endolysin escape into the periplasmic space. Determines the precise timing of host cell lysis. Participates with the endolysin and spanin proteins in the sequential events which lead to the programmed host cell lysis releasing the mature viral particles from the host cell. Isoform Antiholin: Counteracts the aggregation of the holin molecules and thus of pore formation. The chain is Putative antiholin (hol) from Listeria monocytogenes (Bacteriophage A118).